A 544-amino-acid chain; its full sequence is Epidermal growth factor-like protein 6 (544 aa).

The first 30 residues, 1–30 (MAITGGMQSSDMVLLLWITVICACCSFVDS), serve as a signal peptide directing secretion. The 36-residue stretch at 63 to 98 (RKGQCEAVCEQGCKHGECVGPNKCKCFPGFTGKNCN) folds into the EGF-like 1 domain. 6 cysteine pairs are disulfide-bonded: C67–C80, C71–C86, C88–C97, C104–C115, C111–C124, and C126–C138. In terms of domain architecture, EGF-like 2; calcium-binding spans 100–139 (DLNECGLKPRPCEHRCMNTHGSYKCYCLNGYMLMPDGSCS). The EGF-like 3 domain occupies 144-178 (CAMANCQYGCEQVKGDIRCLCPSGGLQLGPDGRTC). The EGF-like 4; calcium-binding domain occupies 180–218 (DIDECAVGKASCPINRRCVNTFGSYYCKCQIGYELKYVN). 5 cysteine pairs are disulfide-bonded: C184–C197, C191–C206, C229–C242, C236–C251, and C253–C264. The EGF-like 5; calcium-binding domain occupies 225–265 (DINECLLNTHKCSINADCLNTQGSFKCRCKHGFKGNGQECS). The tract at residues 332 to 357 (GNDNDEEEGEIEEEEEEELDEEDEEN) is disordered. The stretch at 333-367 (NDNDEEEGEIEEEEEEELDEEDEENVIEEEKLLRG) forms a coiled coil. Positions 334–357 (DNDEEEGEIEEEEEEELDEEDEEN) are enriched in acidic residues. The MAM domain occupies 399-543 (VDCRFDQGTC…VFLSSGPCSD (145 aa)).

The protein belongs to the nephronectin family.

It is found in the secreted. The protein localises to the extracellular space. Its subcellular location is the extracellular matrix. It localises to the basement membrane. Functionally, may play a role in organ morphogenesis. Promotes matrix assembly. This is Epidermal growth factor-like protein 6 (egfl6) from Xenopus laevis (African clawed frog).